A 628-amino-acid polypeptide reads, in one-letter code: Monoterpene synthase like 1, chloroplastic (628 aa).

The Mg(2+) site is built by aspartate 379, aspartate 383, and aspartate 531. The short motif at 379-383 is the DDXXD motif element; the sequence is DDIYD.

This sequence belongs to the terpene synthase family. Tpsd subfamily. It depends on Mg(2+) as a cofactor. Requires Mn(2+) as cofactor.

Its subcellular location is the plastid. It is found in the chloroplast. It functions in the pathway terpene metabolism; oleoresin biosynthesis. The protein operates within secondary metabolite biosynthesis; terpenoid biosynthesis. Its function is as follows. Monoterpene synthase (TPS) involved in the biosynthesis of monoterpene natural products included in conifer oleoresin secretions and volatile emissions; these compounds contribute to biotic and abiotic stress defense against herbivores and pathogens. This is Monoterpene synthase like 1, chloroplastic from Pinus banksiana (Jack pine).